The primary structure comprises 193 residues: Bifunctional protein PyrR (193 aa).

Substrate is bound by residues 48–49 (TR), Arg89, Arg93, 110–118 (DDVLFSGRT), Arg143, and Val167. Residues 106 to 118 (VVLVDDVLFSGRT) carry the PRPP-binding motif.

Belongs to the purine/pyrimidine phosphoribosyltransferase family. PyrR subfamily.

The catalysed reaction is UMP + diphosphate = 5-phospho-alpha-D-ribose 1-diphosphate + uracil. Its function is as follows. Regulates the transcription of the pyrimidine nucleotide (pyr) operon in response to exogenous pyrimidines. Also displays a weak uracil phosphoribosyltransferase activity which is not physiologically significant. The polypeptide is Bifunctional protein PyrR (Streptomyces coelicolor (strain ATCC BAA-471 / A3(2) / M145)).